The chain runs to 546 residues: UDP-glycosyltransferase FPY2 (546 aa).

Positions 1–20 (MSLPKAQILVVVTVGGSTNS) are cleaved as a signal peptide. The helical transmembrane segment at 517–537 (LNNIDVALLFFILLGIISWIT) threads the bilayer.

The protein belongs to the glycosyltransferase 28 family.

Its subcellular location is the membrane. It functions in the pathway secondary metabolite biosynthesis. In terms of biological role, UDP-glycosyltransferase; part of the gene cluster that mediates the biosynthesis of the gamma-pyrones fusapyrone (FPY) and deoxyfusapyrone (dFPY). FPY is an undecaketide and thus likely synthesized by the polyketide synthase FPY1 from acetyl-CoA functioning as starter unit and the addition of 10 malonyl-CoA extender units by successive Claisen-condensations. Next to this, FPY shares some rare features: C-glycosylated 4-deoxyglucose at C-3, a gem-dimethyl group at C-13, and an alpha-beta to beta-gamma double bond shift at C-20. During FPY biosynthesis mono-C-methyl groups are transferred to the tetra-, penta-, hexa- and heptaketide, while two C-methyl groups are transferred to the nonaketide, suggesting that the CMet domain is programmed to selectively catalyze two successive C-alpha-methylation reactions of the nonaketide, while other alpha-carbons are non- or mono-methylated only. While the origin of the 4'-deoxyglucose moiety remains opaque, its transfer to C-3 is most likely mediated by the C-glycosyltransferase FPY2. Next to this, the hydroxyl group present at C-33 and discriminating between FPY and dFPY, is likely to be installed by the cytochrome P450 monooxygenase FPY7. No putative function can be predicted for the remaining genes FPY3-FPY6. The protein is UDP-glycosyltransferase FPY2 of Fusarium mangiferae (Mango malformation disease fungus).